Reading from the N-terminus, the 104-residue chain is Phosphoribosyl-ATP pyrophosphatase (104 aa).

Belongs to the PRA-PH family.

The protein resides in the cytoplasm. The enzyme catalyses 1-(5-phospho-beta-D-ribosyl)-ATP + H2O = 1-(5-phospho-beta-D-ribosyl)-5'-AMP + diphosphate + H(+). It functions in the pathway amino-acid biosynthesis; L-histidine biosynthesis; L-histidine from 5-phospho-alpha-D-ribose 1-diphosphate: step 2/9. The sequence is that of Phosphoribosyl-ATP pyrophosphatase from Allorhizobium ampelinum (strain ATCC BAA-846 / DSM 112012 / S4) (Agrobacterium vitis (strain S4)).